A 177-amino-acid chain; its full sequence is MLDAFSKVITSADGKAAYVGGADLQALKKFVSEGNKRMDSVNAIVSNASCIVSDSVSGMVCENPSLIAPNGGVYTNRKMAACLRDAEIILRYVSYSLLSGDSSVLEDRCLNGLKETYASLGVPAAGNARTISIMKATVIGFITNNSQQKKLSTPAGDCSALASEVGGYFDKVSSALA.

(2R,3E)-phycoerythrobilin contacts are provided by Tyr18, Lys28, Asn35, and Asp39. 3 residues coordinate 15,16-dihydrobiliverdin: Cys50, Asp54, and Cys61. Positions 82, 84, and 85 each coordinate (2R,3E)-phycoerythrobilin. Residue Arg129 coordinates 15,16-dihydrobiliverdin. Asn144 lines the (2R,3E)-phycoerythrobilin pocket. 15,16-dihydrobiliverdin contacts are provided by Gln148 and Lys149. The (2R,3E)-phycoerythrobilin site is built by Pro154, Gly156, and Cys158.

The protein belongs to the phycobiliprotein family. In terms of assembly, heterotetramer of 2 different alpha chains and 2 identical beta chains which form 2 alpha-beta heterodimers within the heterotetramer. The two alpha-beta heterodimers are rotated to an open configuration in contrast to the closed configuration found in other cryptophyte species due to the insertion of a single amino acid, 'Asp-65', in a conserved region of the alpha chain. In the open form, the central chromophores are not in physical contact but are separated by a water-filled channel. Contains three phycoerythrobilin chromophores and one 15,16-dihydrobiliverdin chromophore with binding of the phycoerythrobilin chromophores mediated by both the alpha and beta subunits.

Its subcellular location is the plastid. It is found in the chloroplast thylakoid membrane. In terms of biological role, light-harvesting photosynthetic bile pigment-protein from the phycobiliprotein complex. The protein is Phycoerythrin beta subunit of Hemiselmis andersenii (Cryptophyte alga).